A 193-amino-acid polypeptide reads, in one-letter code: Protein PapJ (193 aa).

Residues 1 to 27 (MVVNKTTAVLYLIALSLSGFIHTFLRA) form the signal peptide.

It is found in the periplasm. This protein maintains pilus integrity and thus is an important participant in pilus assembly. It may function as molecular chaperone directly or indirectly in the correct assembly of PapA subunits. The protein is Protein PapJ (papJ) of Escherichia coli.